A 259-amino-acid chain; its full sequence is MLAKRIIPCLDVTGGRVVKGVNFVELRDAGDPVEIAARYNDQGADELTFLDITATSDGRDLILHIIEAVASQVFIPLTVGGGVRTVEDVRRLLNAGADKTSFNSAALANPQVITDASAKYGAQCIVVAIDAKRRSDEDALLRGAGWDVYSHGGRKNTGLDAVAWAVEMAQRGAGEILLTSMNRDGTKSGFDLELTRAVSDAVSVPVIASGGVGNLDHLADGVQLGGADAVLAASIFHYGEYTVAQAKRHMASRGIPVRL.

Residues D11 and D130 contribute to the active site.

It belongs to the HisA/HisF family. In terms of assembly, heterodimer of HisH and HisF.

It is found in the cytoplasm. The enzyme catalyses 5-[(5-phospho-1-deoxy-D-ribulos-1-ylimino)methylamino]-1-(5-phospho-beta-D-ribosyl)imidazole-4-carboxamide + L-glutamine = D-erythro-1-(imidazol-4-yl)glycerol 3-phosphate + 5-amino-1-(5-phospho-beta-D-ribosyl)imidazole-4-carboxamide + L-glutamate + H(+). It functions in the pathway amino-acid biosynthesis; L-histidine biosynthesis; L-histidine from 5-phospho-alpha-D-ribose 1-diphosphate: step 5/9. Functionally, IGPS catalyzes the conversion of PRFAR and glutamine to IGP, AICAR and glutamate. The HisF subunit catalyzes the cyclization activity that produces IGP and AICAR from PRFAR using the ammonia provided by the HisH subunit. The polypeptide is Imidazole glycerol phosphate synthase subunit HisF (Polaromonas naphthalenivorans (strain CJ2)).